A 464-amino-acid polypeptide reads, in one-letter code: uncharacterized protein (464 aa).

Residues 13–71 form the TRAM domain; sequence MLKVSDIIQIKIDKIVFGGEGLGYYNGFAVFVPMSIPEDELEIEIISIKKTYARGLIKN. Residues Gln295, Tyr324, Glu345, and Asp393 each contribute to the S-adenosyl-L-methionine site. Cys420 acts as the Nucleophile in catalysis.

This sequence belongs to the class I-like SAM-binding methyltransferase superfamily. RNA M5U methyltransferase family.

This is an uncharacterized protein from Fusobacterium nucleatum subsp. nucleatum (strain ATCC 25586 / DSM 15643 / BCRC 10681 / CIP 101130 / JCM 8532 / KCTC 2640 / LMG 13131 / VPI 4355).